A 644-amino-acid chain; its full sequence is DNA gyrase subunit B (644 aa).

The Toprim domain occupies 429–543 (CEIFLVEGDS…AGYVYIAQPP (115 aa)). Glu-435, Asp-508, and Asp-510 together coordinate Mg(2+).

The protein belongs to the type II topoisomerase GyrB family. As to quaternary structure, heterotetramer, composed of two GyrA and two GyrB chains. In the heterotetramer, GyrA contains the active site tyrosine that forms a transient covalent intermediate with DNA, while GyrB binds cofactors and catalyzes ATP hydrolysis. Mg(2+) serves as cofactor. It depends on Mn(2+) as a cofactor. Ca(2+) is required as a cofactor.

Its subcellular location is the cytoplasm. The catalysed reaction is ATP-dependent breakage, passage and rejoining of double-stranded DNA.. In terms of biological role, a type II topoisomerase that negatively supercoils closed circular double-stranded (ds) DNA in an ATP-dependent manner to modulate DNA topology and maintain chromosomes in an underwound state. Negative supercoiling favors strand separation, and DNA replication, transcription, recombination and repair, all of which involve strand separation. Also able to catalyze the interconversion of other topological isomers of dsDNA rings, including catenanes and knotted rings. Type II topoisomerases break and join 2 DNA strands simultaneously in an ATP-dependent manner. The protein is DNA gyrase subunit B of Staphylococcus aureus (strain COL).